A 276-amino-acid polypeptide reads, in one-letter code: ATP synthase subunit delta (276 aa).

Belongs to the ATPase delta chain family. As to quaternary structure, F-type ATPases have 2 components, F(1) - the catalytic core - and F(0) - the membrane proton channel. F(1) has five subunits: alpha(3), beta(3), gamma(1), delta(1), epsilon(1). F(0) has three main subunits: a(1), b(2) and c(10-14). The alpha and beta chains form an alternating ring which encloses part of the gamma chain. F(1) is attached to F(0) by a central stalk formed by the gamma and epsilon chains, while a peripheral stalk is formed by the delta and b chains.

It localises to the cell membrane. F(1)F(0) ATP synthase produces ATP from ADP in the presence of a proton or sodium gradient. F-type ATPases consist of two structural domains, F(1) containing the extramembraneous catalytic core and F(0) containing the membrane proton channel, linked together by a central stalk and a peripheral stalk. During catalysis, ATP synthesis in the catalytic domain of F(1) is coupled via a rotary mechanism of the central stalk subunits to proton translocation. Functionally, this protein is part of the stalk that links CF(0) to CF(1). It either transmits conformational changes from CF(0) to CF(1) or is implicated in proton conduction. The polypeptide is ATP synthase subunit delta (Kineococcus radiotolerans (strain ATCC BAA-149 / DSM 14245 / SRS30216)).